The primary structure comprises 458 residues: Ribulose bisphosphate carboxylase (458 aa).

A substrate-binding site is contributed by N111. K166 functions as the Proton acceptor in the catalytic mechanism. K168 lines the substrate pocket. Mg(2+) contacts are provided by K191, D193, and E194. The residue at position 191 (K191) is an N6-carboxylysine. H287 (proton acceptor) is an active-site residue. Residues R288, H321, and S368 each contribute to the substrate site.

It belongs to the RuBisCO large chain family. Type II subfamily. Homodimer. The cofactor is Mg(2+).

The catalysed reaction is 2 (2R)-3-phosphoglycerate + 2 H(+) = D-ribulose 1,5-bisphosphate + CO2 + H2O. The enzyme catalyses D-ribulose 1,5-bisphosphate + O2 = 2-phosphoglycolate + (2R)-3-phosphoglycerate + 2 H(+). In terms of biological role, ruBisCO catalyzes two reactions: the carboxylation of D-ribulose 1,5-bisphosphate, the primary event in carbon dioxide fixation, as well as the oxidative fragmentation of the pentose substrate. Both reactions occur simultaneously and in competition at the same active site. The protein is Ribulose bisphosphate carboxylase (cbbM) of Rhodobacter capsulatus (Rhodopseudomonas capsulata).